Here is a 295-residue protein sequence, read N- to C-terminus: Probable ketoamine kinase slr1563 (295 aa).

Residue 99–101 (EWL) participates in ATP binding. Aspartate 201 acts as the Proton acceptor in catalysis.

It belongs to the fructosamine kinase family.

Functionally, ketoamine kinase that phosphorylates ketoamines on the third carbon of the sugar moiety to generate ketoamine 3-phosphate. This Synechocystis sp. (strain ATCC 27184 / PCC 6803 / Kazusa) protein is Probable ketoamine kinase slr1563.